The chain runs to 311 residues: MDSPSGSLSPVAIDLAGVSKSYGGKIVVNDLSFTIAAGECFGLLGPNGAGKSTITRMILGMTSPSVGKITVLGAQEPGQVRLARAKIGIVSQFDNLDLEFTVRENLLVYGRYFRMSTREIETVIPSLLEFARLESKANTRVADLSGGMKRRLTLARALINDPQLLILDEPTTGLDPHARHLIWERLRSLLARGKTILLTTHIMEEAERLCDRLCVLEAGRKIAEGRPHALIEEQIGCPVIEIYGGDPQELSLLIRPNARRLEISGETLFCYTPDPEQVRAQLRAYSNLRLLERPPNLEDVFLRLTGREMEK.

Residues 13–243 (IDLAGVSKSY…QIGCPVIEIY (231 aa)) enclose the ABC transporter domain. An ATP-binding site is contributed by 45 to 52 (GPNGAGKS).

The protein belongs to the ABC transporter superfamily. Lipooligosaccharide exporter (TC 3.A.1.102) family. In terms of assembly, the complex is composed of two ATP-binding proteins (NodI) and two transmembrane proteins (NodJ).

Its subcellular location is the cell inner membrane. Part of the ABC transporter complex NodIJ involved in the export of the nodulation factors (Nod factors), the bacterial signal molecules that induce symbiosis and subsequent nodulation induction. Nod factors are LCO (lipo-chitin oligosaccharide), a modified beta-1,4-linked N-acetylglucosamine oligosaccharide. This subunit is responsible for energy coupling to the transport system. The chain is Nod factor export ATP-binding protein I from Rhizobium johnstonii (strain DSM 114642 / LMG 32736 / 3841) (Rhizobium leguminosarum bv. viciae).